The sequence spans 434 residues: Histidinol dehydrogenase (434 aa).

NAD(+)-binding residues include Tyr130, Gln188, and Asn211. Residues Ser237, Gln259, and His262 each coordinate substrate. Positions 259 and 262 each coordinate Zn(2+). Catalysis depends on proton acceptor residues Glu326 and His327. Substrate-binding residues include His327, Asp360, Glu414, and His419. Asp360 is a Zn(2+) binding site. His419 serves as a coordination point for Zn(2+).

The protein belongs to the histidinol dehydrogenase family. In terms of assembly, homodimer. The cofactor is Zn(2+).

It carries out the reaction L-histidinol + 2 NAD(+) + H2O = L-histidine + 2 NADH + 3 H(+). The protein operates within amino-acid biosynthesis; L-histidine biosynthesis; L-histidine from 5-phospho-alpha-D-ribose 1-diphosphate: step 9/9. Functionally, catalyzes the sequential NAD-dependent oxidations of L-histidinol to L-histidinaldehyde and then to L-histidine. In Salmonella choleraesuis (strain SC-B67), this protein is Histidinol dehydrogenase.